Consider the following 105-residue polypeptide: 3-phenylpropionate/cinnamic acid dioxygenase ferredoxin subunit (105 aa).

The Rieske domain occupies 4–99; the sequence is LFVCTVEELP…VVVKDGNIYI (96 aa). Residues C42, H44, C62, and H65 each contribute to the [2Fe-2S] cluster site.

The protein belongs to the bacterial ring-hydroxylating dioxygenase ferredoxin component family. In terms of assembly, this dioxygenase system consists of four proteins: the two subunits of the hydroxylase component (HcaE and HcaF), a ferredoxin (HcaC) and a ferredoxin reductase (HcaD). The cofactor is [2Fe-2S] cluster.

It functions in the pathway aromatic compound metabolism; 3-phenylpropanoate degradation. Its function is as follows. Part of the multicomponent 3-phenylpropionate dioxygenase, that converts 3-phenylpropionic acid (PP) and cinnamic acid (CI) into 3-phenylpropionate-dihydrodiol (PP-dihydrodiol) and cinnamic acid-dihydrodiol (CI-dihydrodiol), respectively. This protein seems to be a 2Fe-2S ferredoxin. This chain is 3-phenylpropionate/cinnamic acid dioxygenase ferredoxin subunit, found in Photorhabdus laumondii subsp. laumondii (strain DSM 15139 / CIP 105565 / TT01) (Photorhabdus luminescens subsp. laumondii).